The sequence spans 297 residues: Probable GTP 3',8-cyclase (297 aa).

The 224-residue stretch at 4-227 (RYGRQIRSFR…MQNRKKYVID (224 aa)) folds into the Radical SAM core domain. GTP is bound at residue R13. Residues C20 and C24 each coordinate [4Fe-4S] cluster. An S-adenosyl-L-methionine-binding site is contributed by Y26. C27 is a binding site for [4Fe-4S] cluster. K61 provides a ligand contact to GTP. Residue G65 participates in S-adenosyl-L-methionine binding. T91 contacts GTP. S115 is an S-adenosyl-L-methionine binding site. K152 contributes to the GTP binding site. [4Fe-4S] cluster is bound by residues C243 and C246. Position 248 to 250 (248 to 250 (RIR)) interacts with GTP. Position 260 (C260) interacts with [4Fe-4S] cluster.

It belongs to the radical SAM superfamily. MoaA family. [4Fe-4S] cluster serves as cofactor.

The catalysed reaction is GTP + AH2 + S-adenosyl-L-methionine = (8S)-3',8-cyclo-7,8-dihydroguanosine 5'-triphosphate + 5'-deoxyadenosine + L-methionine + A + H(+). It functions in the pathway cofactor biosynthesis; molybdopterin biosynthesis. In terms of biological role, catalyzes the cyclization of GTP to (8S)-3',8-cyclo-7,8-dihydroguanosine 5'-triphosphate. This Methanococcus maripaludis (strain DSM 14266 / JCM 13030 / NBRC 101832 / S2 / LL) protein is Probable GTP 3',8-cyclase.